A 284-amino-acid polypeptide reads, in one-letter code: L-ribulose-5-phosphate 3-epimerase UlaE (284 aa).

Belongs to the L-ribulose-5-phosphate 3-epimerase family.

It carries out the reaction L-ribulose 5-phosphate = L-xylulose 5-phosphate. The protein operates within cofactor degradation; L-ascorbate degradation; D-xylulose 5-phosphate from L-ascorbate: step 3/4. Functionally, catalyzes the isomerization of L-xylulose-5-phosphate to L-ribulose-5-phosphate. Is involved in the anaerobic L-ascorbate utilization. In Escherichia coli O45:K1 (strain S88 / ExPEC), this protein is L-ribulose-5-phosphate 3-epimerase UlaE.